The primary structure comprises 338 residues: Ketol-acid reductoisomerase (NADP(+)) (338 aa).

One can recognise a KARI N-terminal Rossmann domain in the interval Met1–Thr181. Residues Tyr24–Gln27, Arg47, and Ser52 contribute to the NADP(+) site. The active site involves His107. Gly133 serves as a coordination point for NADP(+). The KARI C-terminal knotted domain maps to Asn182–Ile327. Mg(2+)-binding residues include Asp190, Glu194, Glu226, and Glu230. Position 251 (Ser251) interacts with substrate.

The protein belongs to the ketol-acid reductoisomerase family. Mg(2+) is required as a cofactor.

It catalyses the reaction (2R)-2,3-dihydroxy-3-methylbutanoate + NADP(+) = (2S)-2-acetolactate + NADPH + H(+). The enzyme catalyses (2R,3R)-2,3-dihydroxy-3-methylpentanoate + NADP(+) = (S)-2-ethyl-2-hydroxy-3-oxobutanoate + NADPH + H(+). The protein operates within amino-acid biosynthesis; L-isoleucine biosynthesis; L-isoleucine from 2-oxobutanoate: step 2/4. Its pathway is amino-acid biosynthesis; L-valine biosynthesis; L-valine from pyruvate: step 2/4. Its function is as follows. Involved in the biosynthesis of branched-chain amino acids (BCAA). Catalyzes an alkyl-migration followed by a ketol-acid reduction of (S)-2-acetolactate (S2AL) to yield (R)-2,3-dihydroxy-isovalerate. In the isomerase reaction, S2AL is rearranged via a Mg-dependent methyl migration to produce 3-hydroxy-3-methyl-2-ketobutyrate (HMKB). In the reductase reaction, this 2-ketoacid undergoes a metal-dependent reduction by NADPH to yield (R)-2,3-dihydroxy-isovalerate. This Methylobacillus flagellatus (strain ATCC 51484 / DSM 6875 / VKM B-1610 / KT) protein is Ketol-acid reductoisomerase (NADP(+)).